Reading from the N-terminus, the 176-residue chain is Ribosome maturation factor RimM (176 aa).

The PRC barrel domain occupies E97–F176.

Belongs to the RimM family. Binds ribosomal protein uS19.

It localises to the cytoplasm. Functionally, an accessory protein needed during the final step in the assembly of 30S ribosomal subunit, possibly for assembly of the head region. Essential for efficient processing of 16S rRNA. May be needed both before and after RbfA during the maturation of 16S rRNA. It has affinity for free ribosomal 30S subunits but not for 70S ribosomes. This chain is Ribosome maturation factor RimM, found in Shewanella sp. (strain MR-4).